The sequence spans 439 residues: MKLGSKQVKIISLLLLDTVFFGIEITTGYLSHSLALIADSFHMLNDIISLVVALWAVNVAKNRNPDSTYTYGWKRAEILGALINAVFLIALCVSILIEALQRIIAPPVIENPKFVLYVGVAGLISNTVGLFLFHDNDQEHGHGHGHSHGGIFADHEMHMPSSHTHTHAHVDGIENTTPMDSTDNISEIMPNAIVDSFMNENTRLLTPENASKTPSYSTSSHTIASGGNYTEHNKRKRSLNMHGVFLHVLGDALGNIGVMLSAFFIWKTDYSWKYYTDPLVSLIITGIIFSSALPLSCKASKILLQATPSTLSGDQVEGDLLKIPGIIAIHDFHIWNLTESIFIASLHIQLDISPEQFTDLAKIVRSKLHRYGIHSATLQPEFITREVTSTERAGDSQGDHLQNDPLSLRPKTYGTGISGSTCLIDDAANCNTADCLEDH.

The Cytoplasmic portion of the chain corresponds to 1-9 (MKLGSKQVK). A helical membrane pass occupies residues 10–30 (IISLLLLDTVFFGIEITTGYL). Residues 31–33 (SHS) are Vacuolar-facing. Residues 34 to 54 (LALIADSFHMLNDIISLVVAL) form a helical membrane-spanning segment. The Cytoplasmic portion of the chain corresponds to 55–76 (WAVNVAKNRNPDSTYTYGWKRA). A helical transmembrane segment spans residues 77–97 (EILGALINAVFLIALCVSILI). At 98-113 (EALQRIIAPPVIENPK) the chain is on the vacuolar side. Residues 114–134 (FVLYVGVAGLISNTVGLFLFH) form a helical membrane-spanning segment. Topologically, residues 135–244 (DNDQEHGHGH…RKRSLNMHGV (110 aa)) are cytoplasmic. 3 short sequence motifs (histidine repeat) span residues 140–144 (HGHGH), 165–169 (HTHAH), and 219–223 (SSHTI). The segment covering 207–230 (PENASKTPSYSTSSHTIASGGNYT) has biased composition (polar residues). Residues 207 to 231 (PENASKTPSYSTSSHTIASGGNYTE) are disordered. The residue at position 225 (serine 225) is a Phosphoserine. The helical transmembrane segment at 245–265 (FLHVLGDALGNIGVMLSAFFI) threads the bilayer. The Vacuolar segment spans residues 266–274 (WKTDYSWKY). Residues 275–295 (YTDPLVSLIITGIIFSSALPL) form a helical membrane-spanning segment. Topologically, residues 296-439 (SCKASKILLQ…CNTADCLEDH (144 aa)) are cytoplasmic. Lysine 301 is covalently cross-linked (Glycyl lysine isopeptide (Lys-Gly) (interchain with G-Cter in ubiquitin)). Residues 388–402 (TSTERAGDSQGDHLQ) are compositionally biased toward basic and acidic residues. The tract at residues 388–408 (TSTERAGDSQGDHLQNDPLSL) is disordered.

It belongs to the cation diffusion facilitator (CDF) transporter (TC 2.A.4) family. SLC30A subfamily.

The protein resides in the vacuole membrane. The enzyme catalyses Zn(2+)(in) = Zn(2+)(out). Vacuolar transporter that regulates zinc homeostasis by mediating zinc transport and storage into the vacuole. Plays a role in resistance to zinc shock resulting from sudden influx of zinc into cytoplasm. May also participate in the regulation of cobalt levels under normal physiological conditions and may be important in the supply of metal that is required for metalloenzyme or cofactor synthesis. Involved in the resistance to cobalt and rhodium ions. The protein is Vacuolar zinc transporter COT1 of Saccharomyces cerevisiae (strain ATCC 204508 / S288c) (Baker's yeast).